The primary structure comprises 342 residues: tRNA dimethylallyltransferase (342 aa).

The span at 1–13 shows a compositional bias: polar residues; sequence MNDTTAKTLNCSP. Residues 1 to 21 form a disordered region; that stretch reads MNDTTAKTLNCSPASRDGFPE. 40-47 contributes to the ATP binding site; the sequence is GPTGVGKT. Residue 42 to 47 coordinates substrate; sequence TGVGKT. Interaction with substrate tRNA stretches follow at residues 65–68 and 189–193; these read DSMQ and QRILR.

The protein belongs to the IPP transferase family. Monomer. The cofactor is Mg(2+).

It catalyses the reaction adenosine(37) in tRNA + dimethylallyl diphosphate = N(6)-dimethylallyladenosine(37) in tRNA + diphosphate. Its function is as follows. Catalyzes the transfer of a dimethylallyl group onto the adenine at position 37 in tRNAs that read codons beginning with uridine, leading to the formation of N6-(dimethylallyl)adenosine (i(6)A). The sequence is that of tRNA dimethylallyltransferase from Syntrophobacter fumaroxidans (strain DSM 10017 / MPOB).